The following is a 255-amino-acid chain: 14-3-3-like protein GF14 psi (255 aa).

Ser66 carries the phosphoserine modification. Thr162 is modified (phosphothreonine). Residue Ser189 is modified to Phosphoserine. A phosphothreonine mark is found at Thr210 and Thr238.

Belongs to the 14-3-3 family. Component of a DNA binding complex that binds to the G box. Interacts with IDH3, AGT3, GLN1-1, GLN1-2, GLN1-4, SAM1, SAM2, MDH1, METK3 and MDH2. Binds to 1-aminocyclopropane-1-carboxylate synthases (ACS) such as ACS2, ACS5, ACS6, ACS8, and ACS11. Interacts with FD. Interacts with DREB1A and DREB1B in the nucleus. Interacts with CINV1.

The protein localises to the cytoplasm. It is found in the nucleus. In terms of biological role, is associated with a DNA binding complex that binds to the G box, a well-characterized cis-acting DNA regulatory element found in plant genes. Involved in the regulation of nutrient metabolism. Reciprocal negative transcription regulation of miR396. Negative regulator of constitutive freezing tolerance and cold acclimation by controlling cold-induced gene expression partially through an ethylene (ET)-dependent pathway; prevents ethylene (ET) biosynthesis, probably by binding 1-aminocyclopropane-1-carboxylate synthases (ACS) to reduce their stability, thus contributing to establish adequate ET levels under both standard and low-temperature conditions. The polypeptide is 14-3-3-like protein GF14 psi (Arabidopsis thaliana (Mouse-ear cress)).